A 373-amino-acid chain; its full sequence is Protein U3 (373 aa).

Belongs to the herpesviridae US22 family.

The polypeptide is Protein U3 (U3) (Human herpesvirus 6A (strain Uganda-1102) (HHV-6 variant A)).